The sequence spans 296 residues: Ribonuclease HIII (296 aa).

The RNase H type-2 domain occupies 80 to 296; that stretch reads LALIGSDEVG…NTKKAYQRLK (217 aa). A divalent metal cation contacts are provided by D86, E87, and D191.

The protein belongs to the RNase HII family. RnhC subfamily. The cofactor is Mn(2+). Mg(2+) serves as cofactor.

Its subcellular location is the cytoplasm. It catalyses the reaction Endonucleolytic cleavage to 5'-phosphomonoester.. Endonuclease that specifically degrades the RNA of RNA-DNA hybrids. The protein is Ribonuclease HIII of Streptococcus thermophilus (strain ATCC BAA-491 / LMD-9).